We begin with the raw amino-acid sequence, 281 residues long: 2-hydroxymuconate semialdehyde hydrolase (281 aa).

The segment at phenylalanine 30–serine 55 is disordered. The 231-residue stretch at proline 31–histidine 261 folds into the AB hydrolase-1 domain. Catalysis depends on residues serine 106, aspartate 227, and histidine 255.

This sequence belongs to the DmpD/TodF/XylF esterase family.

It catalyses the reaction (2Z,4E)-2-hydroxy-6-oxohexa-2,4-dienoate + H2O = 2-oxopent-4-enoate + formate + H(+). The protein operates within aromatic compound metabolism; benzoate degradation via hydroxylation. Catalyzes the conversion of 2-hydroxymuconate semialdehyde to 2-hydroxypent-2,4-dienoate. The protein is 2-hydroxymuconate semialdehyde hydrolase (xylF) of Pseudomonas putida (Arthrobacter siderocapsulatus).